The chain runs to 236 residues: Aspartate/glutamate leucyltransferase (236 aa).

It belongs to the R-transferase family. Bpt subfamily.

Its subcellular location is the cytoplasm. It catalyses the reaction N-terminal L-glutamyl-[protein] + L-leucyl-tRNA(Leu) = N-terminal L-leucyl-L-glutamyl-[protein] + tRNA(Leu) + H(+). It carries out the reaction N-terminal L-aspartyl-[protein] + L-leucyl-tRNA(Leu) = N-terminal L-leucyl-L-aspartyl-[protein] + tRNA(Leu) + H(+). Functions in the N-end rule pathway of protein degradation where it conjugates Leu from its aminoacyl-tRNA to the N-termini of proteins containing an N-terminal aspartate or glutamate. The chain is Aspartate/glutamate leucyltransferase from Saccharophagus degradans (strain 2-40 / ATCC 43961 / DSM 17024).